The primary structure comprises 261 residues: tRNA U34 carboxymethyltransferase (261 aa).

Residues Lys-25, Trp-39, Lys-44, Gly-63, 114–115 (VE), Tyr-135, and Arg-250 contribute to the carboxy-S-adenosyl-L-methionine site.

Belongs to the class I-like SAM-binding methyltransferase superfamily. CmoB family. Homotetramer.

The catalysed reaction is carboxy-S-adenosyl-L-methionine + 5-hydroxyuridine(34) in tRNA = 5-carboxymethoxyuridine(34) in tRNA + S-adenosyl-L-homocysteine + H(+). In terms of biological role, catalyzes carboxymethyl transfer from carboxy-S-adenosyl-L-methionine (Cx-SAM) to 5-hydroxyuridine (ho5U) to form 5-carboxymethoxyuridine (cmo5U) at position 34 in tRNAs. This chain is tRNA U34 carboxymethyltransferase, found in Helicobacter pylori (strain P12).